Here is a 173-residue protein sequence, read N- to C-terminus: uncharacterized protein (173 aa).

Positions 80–107 (HSATVKRTDSSHRLKSHVVDKRPRRSLD) are disordered. Residues 85–107 (KRTDSSHRLKSHVVDKRPRRSLD) are compositionally biased toward basic and acidic residues.

This is an uncharacterized protein from Autographa californica nuclear polyhedrosis virus (AcMNPV).